The sequence spans 437 residues: Probable N-acetylmuramidase (437 aa).

The first 57 residues, 1 to 57 (MPVSRVKVKNRHLKKKTKKPLAFYKPTTKFVGAVLIAGTLTTTHELLLQQTSPMVQA), serve as a signal peptide directing secretion. Disordered stretches follow at residues 217–244 (SSAGNTNSGGSTTTNTNNNSGTNSSSTT), 291–319 (SSTNSGGSNNSASTTPTTSVTPAKPASQT), and 367–392 (ATSNPSTGSGSTATNNSNSTSSNSNA). In terms of domain architecture, LysM 1 spans 243 to 286 (TTYTVKSGDTLWGISQRYGISVAQIQSANNLKSTIIYIGQKLLL). The segment covering 291 to 317 (SSTNSGGSNNSASTTPTTSVTPAKPAS) has biased composition (low complexity). Positions 319 to 362 (TSVKVKSGDTLWALSVKYKTSIAQLKSWNHLSSDTIYIGQNLIV) constitute a LysM 2 domain. A LysM 3 domain is found at 393 to 436 (SIHKVVKGDTLWGLSQKSGSPIASIKAWNHLSSDTILIGQYLRI).

This sequence belongs to the glycosyl hydrolase 73 family.

It localises to the secreted. It catalyses the reaction Hydrolysis of (1-&gt;4)-beta-linkages between N-acetylmuramic acid and N-acetyl-D-glucosamine residues in a peptidoglycan and between N-acetyl-D-glucosamine residues in chitodextrins.. Functionally, hydrolyzes the cell wall of L.lactis and M.lysodeikticus. Required for cell separation during growth. The chain is Probable N-acetylmuramidase (acmA) from Lactococcus lactis subsp. cremoris (Streptococcus cremoris).